The following is a 264-amino-acid chain: Endoglucanase S (264 aa).

The signal sequence occupies residues 1–32; it reads MQTVNTQPHRIFRVLLPAVFSSLLLSSLTVSA.

The protein belongs to the glycosyl hydrolase 12 (cellulase H) family.

The enzyme catalyses Endohydrolysis of (1-&gt;4)-beta-D-glucosidic linkages in cellulose, lichenin and cereal beta-D-glucans.. This chain is Endoglucanase S (celS), found in Pectobacterium parmentieri.